The chain runs to 362 residues: MGIYLSTPKTDKFSEDGENDKLKLGLSSMQGWRANMEDAHSALLNLDNETSFFGVFDGHGGRVVAKFCAKYLHSQVLRSEAYSAGDLGTAVHRAFFRMDEMMRGQRGWRELSALGDKINKIGGMIEGLIWSPRGSDSNNGQDDWSFEEGPHSDFAGPTCGCTACVALIRNNQLVVANAGDSRCVISRAGQAYNLSRDHKPELEAERDRIVKAGGFIHMGRINGSLNLTRAIGDMEFKQNKFLPPEKQIVTANPDINVVELCDDDDFLVLACDGIWDCMSSQQLVDFIHEHIQKESSLSAVCERVLDRCLAPSTIGGEGCDNMTMVLVQFKKPITQNKKADVGEQSVKGVEEAEINAAEENGS.

In terms of domain architecture, PPM-type phosphatase spans 23-329 (KLGLSSMQGW…DNMTMVLVQF (307 aa)). Mn(2+)-binding residues include D57, G58, D272, and D320.

It belongs to the PP2C family. Requires Mg(2+) as cofactor. Mn(2+) serves as cofactor.

It catalyses the reaction O-phospho-L-seryl-[protein] + H2O = L-seryl-[protein] + phosphate. It carries out the reaction O-phospho-L-threonyl-[protein] + H2O = L-threonyl-[protein] + phosphate. In Oryza sativa subsp. japonica (Rice), this protein is Probable protein phosphatase 2C 11.